The chain runs to 430 residues: Tol-Pal system protein TolB (430 aa).

The N-terminal stretch at 1–21 (MKQAFRLMVGLLVLWASVLHA) is a signal peptide.

It belongs to the TolB family. The Tol-Pal system is composed of five core proteins: the inner membrane proteins TolA, TolQ and TolR, the periplasmic protein TolB and the outer membrane protein Pal. They form a network linking the inner and outer membranes and the peptidoglycan layer.

Its subcellular location is the periplasm. In terms of biological role, part of the Tol-Pal system, which plays a role in outer membrane invagination during cell division and is important for maintaining outer membrane integrity. TolB occupies a key intermediary position in the Tol-Pal system because it communicates directly with both membrane-embedded components, Pal in the outer membrane and TolA in the inner membrane. The sequence is that of Tol-Pal system protein TolB from Edwardsiella ictaluri (strain 93-146).